Reading from the N-terminus, the 2280-residue chain is Metacaspase-3 (2280 aa).

Disordered regions lie at residues 56-83, 202-284, 791-819, 931-954, 994-1015, 1278-1306, and 1469-1500; these read ILSK…DRED, YSTE…THRG, YKNS…MVNN, DDNS…RYDK, SGKY…DDSE, KTNN…NPFI, and KAPT…NANA. Basic and acidic residues predominate over residues 63-83; it reads NKNENIKKRINEKDNDTDRED. 2 stretches are compositionally biased toward polar residues: residues 205-219 and 228-278; these read EHTQ…TSKR and DKAQ…NRKG. Composition is skewed to low complexity over residues 793–819 and 931–941; these read NSMN…MVNN and DDNSVQDSFFS. Composition is skewed to low complexity over residues 1278–1303 and 1482–1500; these read KTNN…NNSN and APTN…NANA.

Belongs to the peptidase C14B family.

In terms of biological role, protease that cleaves specifically after arginine or lysine residues. This Plasmodium falciparum (isolate 3D7) protein is Metacaspase-3.